The following is a 209-amino-acid chain: MSDFGINLDAICDNVRRNSSNSSIKSQVSNRSSRKMDFVDEDELSTYFNSKTSVTQSDSCSNDLNVKHSIIAEAVVCDESAHVSADAVQEKDVVVPKMDESVMKWMMDSHDGICVNGGLNFSKLKNKSNEHETKVTSETNVSAHVSAGINSQLGMFNPIQHKIKKEAIPEMFEDEDTDECTCRNCPYKEKYLKLRKKLKNVLVDIITEM.

Mg(2+) is bound at residue Asp-86.

The protein belongs to the rotavirus NSP5 family. In terms of assembly, homodimer. Interacts with VP1. Interacts with VP2. Interacts with NSP2 and NSP6. Requires Mg(2+) as cofactor. Post-translationally, O-glycosylated.

It is found in the host cytoplasm. In terms of biological role, plays an essential role in the viral genome replication. Participates, together with NSP2, in the formation of viral factories (viroplasms) which are large inclusions in the host cytoplasm where replication intermediates are assembled and viral RNA replication takes place. Orchestrates the recruitment of viroplasmic proteins such as capsid proteins to these factories. The chain is Non-structural protein 5 from Bos taurus (Bovine).